We begin with the raw amino-acid sequence, 86 residues long: Small ribosomal subunit protein bS20 (86 aa).

Residues 1 to 21 (MANTKSAIKAARKSLRLHDRN) form a disordered region.

Belongs to the bacterial ribosomal protein bS20 family.

Its function is as follows. Binds directly to 16S ribosomal RNA. The polypeptide is Small ribosomal subunit protein bS20 (Opitutus terrae (strain DSM 11246 / JCM 15787 / PB90-1)).